A 233-amino-acid polypeptide reads, in one-letter code: Ion-translocating oxidoreductase complex subunit E (233 aa).

6 consecutive transmembrane segments (helical) span residues 18–38 (ALVQ…ATNA), 39–59 (LGLG…VSAL), 69–89 (IPIY…LINA), 92–112 (FGLY…CIVI), 128–148 (ALDG…LGAL), and 182–202 (PFLL…LLAG).

The protein belongs to the NqrDE/RnfAE family. The complex is composed of six subunits: RnfA, RnfB, RnfC, RnfD, RnfE and RnfG.

The protein resides in the cell inner membrane. Part of a membrane-bound complex that couples electron transfer with translocation of ions across the membrane. In Yersinia pseudotuberculosis serotype O:3 (strain YPIII), this protein is Ion-translocating oxidoreductase complex subunit E.